A 471-amino-acid polypeptide reads, in one-letter code: Putative multidrug resistance protein MdtD (471 aa).

The next 13 helical transmembrane spans lie at 12–32 (LWIVAFGFFMQSLDTTIVNTA), 49–69 (MVIVSYVLTVAVMLPASGWMA), 72–92 (IGVRNIFFTAIVLFTLGSLFC), 101–123 (LVMSRVLQGVGGAMMVPVGRLTV), 138–158 (FVTLPGQVGPLLGPALGGILV), 165–185 (WIFLINLPVGIVGAIATLWLM), 195–215 (FDIFGFVLLAAGMATLTLALD), 220–240 (LGISTLTLCLLIVIGIVSILW), 265–285 (IGLFGSFVGRLGSGMLPFMTP), 286–306 (VFLQIGLGFSPFHAGLMMIPM), 342–362 (LVFMAVALMGWYYVLPLVLFF), 393–413 (LLSMIMQLSMSVGVTVAGLLL), and 431–451 (VFLYTYLSMAVIIALPALIFA).

This sequence belongs to the major facilitator superfamily. TCR/Tet family.

The protein localises to the cell inner membrane. This is Putative multidrug resistance protein MdtD from Enterobacter sp. (strain 638).